Consider the following 196-residue polypeptide: uncharacterized protein (196 aa).

In terms of domain architecture, HD spans 51 to 164 (VAEHSLLVEE…DRIFGKPDPV (114 aa)).

This is an uncharacterized protein from Rhodobacter capsulatus (strain ATCC BAA-309 / NBRC 16581 / SB1003).